Reading from the N-terminus, the 467-residue chain is Probable protein phosphatase 2C 55 (467 aa).

The PPM-type phosphatase domain occupies Ser222–Val458. Asp252, Gly253, Asp383, and Asp449 together coordinate Mn(2+).

This sequence belongs to the PP2C family. Requires Mg(2+) as cofactor. The cofactor is Mn(2+).

The enzyme catalyses O-phospho-L-seryl-[protein] + H2O = L-seryl-[protein] + phosphate. It catalyses the reaction O-phospho-L-threonyl-[protein] + H2O = L-threonyl-[protein] + phosphate. This chain is Probable protein phosphatase 2C 55, found in Arabidopsis thaliana (Mouse-ear cress).